The following is a 329-amino-acid chain: MQGSVTEFLKPRLVDIEQVSSTHAKVTLEPLERGFGHTLGNALRRILLSSMPGCAVTEVEIDGVLHEYSTKEGVQEDILEILLNLKGLAVRVQGKDEVILTLNKSGIGPVTAADITHDGDVEIVKPQHVICHLTDENASINMRIKVQRGRGYVPASARIHSEEDERPIGRLLVDACYSPVERIAYNVEAARVEQRTDLDKLVIEMETNGTIDPEEAIRRAATILAEQLEAFVDLRDVRQPEVKEEKPEFDPILLRPVDDLELTVRSANCLKAEAIHYIGDLVQRTEVELLKTPNLGKKSLTEIKDVLASRGLSLGMRLENWPPASIADE.

Residues 1–235 (MQGSVTEFLK…EQLEAFVDLR (235 aa)) form an alpha N-terminal domain (alpha-NTD) region. The segment at 249-329 (FDPILLRPVD…NWPPASIADE (81 aa)) is alpha C-terminal domain (alpha-CTD).

This sequence belongs to the RNA polymerase alpha chain family. Homodimer. The RNAP catalytic core consists of 2 alpha, 1 beta, 1 beta' and 1 omega subunit. When a sigma factor is associated with the core the holoenzyme is formed, which can initiate transcription.

The enzyme catalyses RNA(n) + a ribonucleoside 5'-triphosphate = RNA(n+1) + diphosphate. In terms of biological role, DNA-dependent RNA polymerase catalyzes the transcription of DNA into RNA using the four ribonucleoside triphosphates as substrates. This Yersinia pestis bv. Antiqua (strain Antiqua) protein is DNA-directed RNA polymerase subunit alpha.